The chain runs to 533 residues: uncharacterized protein (533 aa).

The disordered stretch occupies residues 1-26 (MKRFFSKLFSKSPTSGRVPSPDSDYS). Residues Ser20 and Ser23 each carry the phosphoserine modification. Residue Tyr25 is modified to Phosphotyrosine. Ser26 bears the Phosphoserine mark. Helical transmembrane passes span 178 to 198 (ILAVLHIPVALIWLNLEHILI), 213 to 230 (YMRVFILAAPGYAVFEAL), 242 to 264 (PITYVLCFAAPLNILLNYLLVWH), 274 to 296 (APVAVATTFWFQSICLILYICFS), 313 to 333 (LSPMLHFSFHGMLMIVTEWAA), 353 to 373 (SILLTSTSLLFQIPFAFAVAS), 394 to 414 (RVAYSLALCISIFDGSLIFCF), 435 to 455 (IFPILSLFIVTDGLNAVGGGL), 466 to 486 (GLISIGSSYLFALPVTVFVVV), and 495 to 515 (IWCGMILSSVTAITCQFTVLF).

The protein belongs to the multi antimicrobial extrusion (MATE) (TC 2.A.66.1) family.

The protein localises to the vacuole membrane. This is an uncharacterized protein from Schizosaccharomyces pombe (strain 972 / ATCC 24843) (Fission yeast).